The chain runs to 123 residues: Ribosome-binding factor A (123 aa).

This sequence belongs to the RbfA family. In terms of assembly, monomer. Binds 30S ribosomal subunits, but not 50S ribosomal subunits or 70S ribosomes.

It is found in the cytoplasm. Functionally, one of several proteins that assist in the late maturation steps of the functional core of the 30S ribosomal subunit. Associates with free 30S ribosomal subunits (but not with 30S subunits that are part of 70S ribosomes or polysomes). Required for efficient processing of 16S rRNA. May interact with the 5'-terminal helix region of 16S rRNA. The protein is Ribosome-binding factor A of Cupriavidus metallidurans (strain ATCC 43123 / DSM 2839 / NBRC 102507 / CH34) (Ralstonia metallidurans).